A 234-amino-acid polypeptide reads, in one-letter code: Sugar fermentation stimulation protein A (234 aa).

Residues 201-220 constitute a DNA-binding region (H-T-H motif); that stretch reads LLSEAQNKGVEVLAYKAELS.

Belongs to the SfsA family.

Binds to DNA non-specifically. Could be a regulatory factor involved in maltose metabolism. The protein is Sugar fermentation stimulation protein A of Salmonella typhi.